We begin with the raw amino-acid sequence, 275 residues long: Monooxygenase af470 (275 aa).

It carries out the reaction prefumagillin + NADPH + 2 O2 = fumagillin + acetaldehyde + NADP(+) + H2O. It participates in secondary metabolite biosynthesis; terpenoid biosynthesis. Its function is as follows. Monooxygenase; part of the gene cluster that mediates the biosynthesis of fumagillin, a meroterpenoid that has numerous biological activities including irreversible inhibition of human type 2 methionine aminopeptidase (METAP2). Within the pathway, the monooxygenase af470 catalyzes the oxidative cleavage of prefumagillin to yield the final compound of the pathway, fumagillin. The pathway begins with the conversion of farnesyl pyrophosphate (FPP) to beta-trans-bergamotene by the membrane-bound beta-trans-bergamotene synthase af520. The multifunctional cytochrome P450 monooxygenase af510 then converts beta-trans-bergamotene into 5-keto-demethoxyfumagillol via several oxydation steps. 5-keto-demethoxyfumagillol is then subjected to successive C-6 hydroxylation and O-methylation by the dioxygenase af480 and O-methyltransferase af390-400, respectively, to yield 5-keto-fumagillol, which is then stereoselectively reduced by the keto-reductase af490 to 5R-hydroxy-seco-sesquiterpene. The next step is the polyketide transferase af380-catalyzed transfer of a dodecapentaenoyl group synthesized by the polyketide synthase af370 onto 5R-hydroxy-seco-sesquiterpene which leads to the production of prefumagillin. Finally, oxidative cleavage by the monooxygenase af470 converts prefumagillin to fumagillin. This chain is Monooxygenase af470, found in Aspergillus fumigatus (strain ATCC MYA-4609 / CBS 101355 / FGSC A1100 / Af293) (Neosartorya fumigata).